A 929-amino-acid chain; its full sequence is Band 3 anion transport protein (929 aa).

The residue at position 1 (Met1) is an N-acetylmethionine. At 1–422 (MGDMRDHEEV…LSDITDALSP (422 aa)) the chain is on the cytoplasmic side. Position 18 is a phosphoserine (Ser18). Phosphotyrosine is present on residues Tyr31 and Tyr56. The interval 46-67 (ALPTEQTATDYVPSSTSTPHPS) is disordered. Residues 58–67 (PSSTSTPHPS) are compositionally biased toward low complexity. The interval 69–303 (GQVYVELQEL…LGRAAATLMT (235 aa)) is globular. Positions 190–199 (AVLTRSGGAS) are interaction with ANK1. Residues Ser199, Ser222, and Ser363 each carry the phosphoserine modification. The segment at 317–370 (REELLRSLESFLDCSLVLPPTDAPSEKALLNLVPVQKELLRRRYLPSPAKPDPN) is dimerization arm. Positions 366–389 (KPDPNLYNTLDLNGGKGGPGDEDD) are disordered. Tyr372 is modified (phosphotyrosine). Thr374 is subject to Phosphothreonine. The chain crosses the membrane as a helical span at residues 423 to 446 (QVLAAVIFIYFAALSPAVTFGGLL). Residues 447 to 454 (GEKTRNLM) are Extracellular-facing. Residues 455–475 (GVSELLISTAVQGILFALLGA) form a helical membrane-spanning segment. Topologically, residues 476–478 (QPL) are cytoplasmic. A discontinuously helical membrane pass occupies residues 479-495 (LVLGFSGPLLVFEEAFF). Residues 496-504 (SFCESNNLE) are Extracellular-facing. The chain crosses the membrane as a helical span at residues 505-525 (YIVGRAWIGFWLILLVMLVVA). Topologically, residues 526-537 (FEGSFLVQYISR) are cytoplasmic. A helical membrane pass occupies residues 538-560 (YTQEIFSFLISLIFIYETFSKLI). Topologically, residues 561-588 (KIFQDYPLQQTYAPVVMKPKPQGPVPNT) are extracellular. The helical transmembrane segment at 589-609 (ALFSLVLMAGTFLLAMTLRKF) threads the bilayer. At 610–620 (KNSTYFPGKLR) the chain is on the cytoplasmic side. The helical transmembrane segment at 621–641 (RVIGDFGVPISILIMVLVDSF) threads the bilayer. Residues 642–681 (IKGTYTQKLSVPDGLKVSNSSARGWVIHPLGLYRLFPTWM) are Extracellular-facing. Asn660 carries N-linked (GlcNAc...) asparagine glycosylation. The helical transmembrane segment at 682-702 (MFASVLPALLVFILIFLESQI) threads the bilayer. Residues 703–718 (TTLIVSKPERKMIKGS) are Cytoplasmic-facing. The chain crosses the membrane as a helical span at residues 719 to 737 (GFHLDLLLVVGMGGVAALF). A discontinuously helical membrane pass occupies residues 738–755 (GMPWLSATTVRSVTHANA). At 756-778 (LTVMGKASGPGAAAQIQEVKEQR) the chain is on the cytoplasmic side. The next 2 membrane-spanning stretches (helical) occupy residues 779–799 (ISGL…PILS) and 800–818 (RIPL…VTSL). Residues 819 to 856 (SGIQLFDRILLLFKPPKYHPDVPFVKRVKTWRMHLFTG) lie on the Cytoplasmic side of the membrane. The discontinuously helical intramembrane region spans 857–887 (IQIICLAVLWVVKSTPASLALPFVLILTVPL). The S-palmitoyl cysteine moiety is linked to residue Cys861. At 888 to 929 (RRLILPLIFRELELQCLDGDDAKVTFDEENGLDEYDEVPMPV) the chain is on the cytoplasmic side. Tyr922 is subject to Phosphotyrosine.

It belongs to the anion exchanger (TC 2.A.31) family. In terms of assembly, a dimer in solution, but in its membrane environment, it exists primarily as a mixture of dimers and tetramers and spans the membrane asymmetrically. Component of the ankyrin-1 complex in the erythrocyte, composed of ANK1, RHCE, RHAG, SLC4A1, EPB42, GYPA, GYPB and AQP1. Interacts with STOM; this interaction positively regulates SLC4A1 activity. Interacts with GYPA; a GYPA monomer is bound at each end of the SLC4A1 dimer forming a heterotetramer. Three SLC4A1 dimers (Band 3-I, Band 3-II and Band 3-III) participates in the ankyrin-1 complex. Interacts (via the cytoplasmic domain) with EPB42; this interaction is mediated by the SLC4A1 Band 3-I dimer. Interacts (via the cytoplasmic domain) directly with ANK1; this interaction is mediated by the SLC4A1 Band 3-II and Band 3-III dimers. As to quaternary structure, interacts with TMEM139. Detected in erythrocytes (at protein level).

It localises to the cell membrane. The protein resides in the basolateral cell membrane. It catalyses the reaction hydrogencarbonate(in) + chloride(out) = hydrogencarbonate(out) + chloride(in). Functions both as a transporter that mediates electroneutral anion exchange across the cell membrane and as a structural protein. Component of the ankyrin-1 complex of the erythrocyte membrane; required for normal flexibility and stability of the erythrocyte membrane and for normal erythrocyte shape via the interactions of its cytoplasmic domain with cytoskeletal proteins, glycolytic enzymes, and hemoglobin. Functions as a transporter that mediates the 1:1 exchange of inorganic anions across the erythrocyte membrane. Mediates chloride-bicarbonate exchange in the kidney, and is required for normal acidification of the urine. The chain is Band 3 anion transport protein from Mus musculus (Mouse).